The primary structure comprises 31 residues: GCVGHRKSCEHDKKNGCCYFMTCNCWHPMGQ.

Disulfide bonds link C2–C18 and C9–C23.

Expressed by the venom gland.

The protein localises to the secreted. Its function is as follows. Antagonist of L-type calcium channels (Cav1/CACNA1). The protein is U6-ctenitoxin-Co1a of Ctenus ornatus (Brazilian spider).